The sequence spans 331 residues: Putative NAD(P)H nitroreductase acg (331 aa).

FMN contacts are provided by residues 28-32 (QPWRW) and arginine 316.

This sequence belongs to the nitroreductase family. Requires FMN as cofactor.

This Mycobacterium tuberculosis (strain CDC 1551 / Oshkosh) protein is Putative NAD(P)H nitroreductase acg (acg).